The sequence spans 836 residues: Protein O-mannosyl-transferase tmtc2 (836 aa).

A helical transmembrane segment spans residues Met-1–Ala-21. The Extracellular portion of the chain corresponds to Asp-22–Tyr-77. A helical transmembrane segment spans residues Leu-78–Val-98. Residues Thr-99–Lys-107 lie on the Cytoplasmic side of the membrane. The chain crosses the membrane as a helical span at residues Ala-108–Ile-128. Over His-129 to Ala-132 the chain is Extracellular. A helical membrane pass occupies residues Val-133 to Leu-153. The Cytoplasmic segment spans residues Cys-154–Tyr-164. A helical transmembrane segment spans residues Ser-165 to Trp-185. Topologically, residues Lys-186–Gln-188 are extracellular. A helical transmembrane segment spans residues Gly-189 to Met-209. At Asn-210 to Lys-220 the chain is on the cytoplasmic side. Residues Asn-221–Ala-241 form a helical membrane-spanning segment. The Extracellular portion of the chain corresponds to Arg-242–His-312. Residues Thr-313–Ile-333 form a helical membrane-spanning segment. At Lys-334 to Asn-392 the chain is on the cytoplasmic side. Residues Ile-393 to Phe-413 traverse the membrane as a helical segment. A topological domain (extracellular) is located at residue Tyr-414. Residues Val-415–Val-435 form a helical membrane-spanning segment. The Cytoplasmic portion of the chain corresponds to Thr-436–Asn-449. A helical transmembrane segment spans residues Ile-450–Thr-470. At Val-471–Thr-836 the chain is on the extracellular side. TPR repeat units follow at residues Ala-493–Met-526, Ala-527–Leu-560, Ala-561–Asn-594, Thr-606–Gln-639, Gln-643–His-676, Ile-677–Lys-710, Gly-711–Glu-744, Phe-745–Tyr-778, and Pro-779–Asp-812.

This sequence belongs to the TMTC family.

It localises to the membrane. Its subcellular location is the endoplasmic reticulum. The enzyme catalyses a di-trans,poly-cis-dolichyl beta-D-mannosyl phosphate + L-seryl-[protein] = 3-O-(alpha-D-mannosyl)-L-seryl-[protein] + a di-trans,poly-cis-dolichyl phosphate + H(+). It catalyses the reaction a di-trans,poly-cis-dolichyl beta-D-mannosyl phosphate + L-threonyl-[protein] = 3-O-(alpha-D-mannosyl)-L-threonyl-[protein] + a di-trans,poly-cis-dolichyl phosphate + H(+). Its pathway is protein modification; protein glycosylation. Transfers mannosyl residues to the hydroxyl group of serine or threonine residues. This is Protein O-mannosyl-transferase tmtc2 (tmtc2) from Xenopus laevis (African clawed frog).